The chain runs to 711 residues: Polyribonucleotide nucleotidyltransferase (711 aa).

The Mg(2+) site is built by Asp486 and Asp492. The KH domain maps to 553-612 (PRIHTIKINPDKIKDVIGKGGSVIRALTEETGTTIEIEDDGTVKIAATDGEKAKNAIRRI). Residues 622–690 (GRVYNGKVTR…RQGRIRLSIK (69 aa)) enclose the S1 motif domain. The segment at 689–711 (IKEATEQSQPAAAPEAPAAEQGE) is disordered. Residues 694 to 711 (EQSQPAAAPEAPAAEQGE) are compositionally biased toward low complexity.

This sequence belongs to the polyribonucleotide nucleotidyltransferase family. In terms of assembly, component of the RNA degradosome, which is a multiprotein complex involved in RNA processing and mRNA degradation. The cofactor is Mg(2+).

The protein localises to the cytoplasm. The enzyme catalyses RNA(n+1) + phosphate = RNA(n) + a ribonucleoside 5'-diphosphate. Its function is as follows. Involved in mRNA degradation. Catalyzes the phosphorolysis of single-stranded polyribonucleotides processively in the 3'- to 5'-direction. In Escherichia fergusonii (strain ATCC 35469 / DSM 13698 / CCUG 18766 / IAM 14443 / JCM 21226 / LMG 7866 / NBRC 102419 / NCTC 12128 / CDC 0568-73), this protein is Polyribonucleotide nucleotidyltransferase.